The chain runs to 203 residues: V-type ATP synthase subunit D (203 aa).

It belongs to the V-ATPase D subunit family.

Produces ATP from ADP in the presence of a proton gradient across the membrane. The protein is V-type ATP synthase subunit D of Streptococcus pneumoniae serotype 19F (strain G54).